A 304-amino-acid polypeptide reads, in one-letter code: Killer cell immunoglobulin-like receptor 2DS1 (304 aa).

The first 21 residues, 1 to 21, serve as a signal peptide directing secretion; the sequence is MSLTVVSMACVGFFLLQGAWP. Topologically, residues 22-245 are extracellular; that stretch reads HEGVHRKPSL…SETGNPRHLH (224 aa). Ig-like C2-type domains lie at 42–107 and 142–205; these read EETV…VTHS and GENV…FRDS. Cysteines 49 and 100 form a disulfide. Residues Asn-67, Asn-84, Asn-144, and Asn-178 are each glycosylated (N-linked (GlcNAc...) asparagine). Residues Cys-149 and Cys-198 are joined by a disulfide bond. Residues 220 to 239 are disordered; sequence VTGNPSNSWPSPTEPSSETG. Low complexity predominate over residues 223–239; it reads NPSNSWPSPTEPSSETG. The chain crosses the membrane as a helical span at residues 246 to 264; sequence VLIGTSVVKIPFTILLFFL. At 265 to 304 the chain is on the cytoplasmic side; it reads LHRWCSDKKNAAVMDQEPAGNRTVNSEDSDEQDHQEVSYA. The disordered stretch occupies residues 280-304; the sequence is QEPAGNRTVNSEDSDEQDHQEVSYA.

This sequence belongs to the immunoglobulin superfamily. Interacts with the adapter protein TYROBP/DAP12; the interaction enhances KIR2DS1 stability at the cell surface. In terms of tissue distribution, expressed by NK cells.

Its subcellular location is the cell membrane. Receptor on natural killer (NK) cells for some HLA-C alleles such as w6. Does not inhibit the activity of NK cells. The sequence is that of Killer cell immunoglobulin-like receptor 2DS1 from Homo sapiens (Human).